Reading from the N-terminus, the 676-residue chain is Cysteine-rich receptor-like protein kinase 8 (676 aa).

The N-terminal stretch at 1–34 (MYIVSMFGLAGLEALICFIFLFLFSFLTSFKASA) is a signal peptide. Residues 35-291 (QNPFYLNHDC…IPGKSGNSTV (257 aa)) are Extracellular-facing. Gnk2-homologous domains lie at 38–142 (FYLN…HKNF) and 151–255 (ELIM…LYAF). Residues Asn46, Asn53, Asn71, Asn114, Asn159, Asn187, Asn257, and Asn288 are each glycosylated (N-linked (GlcNAc...) asparagine). Residues 292-312 (LVVAIVVLAVLLFIALVGYCF) traverse the membrane as a helical segment. The Cytoplasmic portion of the chain corresponds to 313 to 676 (LAQRTKKTFD…DELITDLYPR (364 aa)). The Protein kinase domain occupies 353 to 639 (FAESNKIGRG…TLPVPRQPGF (287 aa)). ATP contacts are provided by residues 359 to 367 (IGRGGFGEV) and Lys381. Position 426 is a phosphotyrosine (Tyr426). The active-site Proton acceptor is the Asp478. Ser482 bears the Phosphoserine mark. Thr518 is modified (phosphothreonine). Tyr526 is subject to Phosphotyrosine. The interval 640–666 (FIQSSPVKDPTDSDQSTTTKSTPASID) is disordered. Residues 652–662 (SDQSTTTKSTP) are compositionally biased toward low complexity.

This sequence belongs to the protein kinase superfamily. Ser/Thr protein kinase family. CRK subfamily.

The protein resides in the membrane. It carries out the reaction L-seryl-[protein] + ATP = O-phospho-L-seryl-[protein] + ADP + H(+). The enzyme catalyses L-threonyl-[protein] + ATP = O-phospho-L-threonyl-[protein] + ADP + H(+). The polypeptide is Cysteine-rich receptor-like protein kinase 8 (CRK8) (Arabidopsis thaliana (Mouse-ear cress)).